Reading from the N-terminus, the 100-residue chain is Urease subunit gamma (100 aa).

This sequence belongs to the urease gamma subunit family. As to quaternary structure, heterotrimer of UreA (gamma), UreB (beta) and UreC (alpha) subunits. Three heterotrimers associate to form the active enzyme.

It is found in the cytoplasm. The enzyme catalyses urea + 2 H2O + H(+) = hydrogencarbonate + 2 NH4(+). It participates in nitrogen metabolism; urea degradation; CO(2) and NH(3) from urea (urease route): step 1/1. This is Urease subunit gamma from Synechococcus sp. (strain CC9902).